Consider the following 270-residue polypeptide: uncharacterized protein (270 aa).

The first 22 residues, 1-22 (MEYIKKIALYMSVLLLIIFIGG), serve as a signal peptide directing secretion. Cys-23 carries the N-palmitoyl cysteine lipid modification. Cys-23 is lipidated: S-diacylglycerol cysteine.

The protein belongs to the staphylococcal tandem lipoprotein family.

It is found in the cell membrane. This is an uncharacterized protein from Staphylococcus aureus (strain USA300).